A 93-amino-acid chain; its full sequence is Alpha-defensin 21 (93 aa).

The N-terminal stretch at methionine 1–threonine 19 is a signal peptide. The propeptide occupies aspartate 20–leucine 58. The disordered stretch occupies residues isoleucine 22–serine 43. Over residues threonine 25–glutamine 40 the composition is skewed to acidic residues. 3 disulfides stabilise this stretch: cysteine 64–cysteine 89, cysteine 66–cysteine 81, and cysteine 71–cysteine 88.

This sequence belongs to the alpha-defensin family.

It localises to the secreted. Functionally, may have microbicidal activities. This chain is Alpha-defensin 21 (Defa21), found in Mus musculus (Mouse).